Reading from the N-terminus, the 457-residue chain is Nuclear hormone receptor family member nhr-20 (457 aa).

The segment at residues 16-92 (TSKCLVCEHP…AGMRRECVQK (77 aa)) is a DNA-binding region (nuclear receptor). NR C4-type zinc fingers lie at residues 19–40 (CLVCEHPDGGSAHFGSTSCLAC) and 56–80 (CKKDKNCVIFHELRMICRACRFDKC). A disordered region spans residues 125–182 (GDQTDDNSPLSIEKKSPPGLLPNDSPMMADFKFDPSDIPSTSGGSTQRLERSPSPKLA). A compositionally biased stretch (polar residues) spans 162-171 (IPSTSGGSTQ). The NR LBD domain occupies 201-457 (QLKNSMDRRR…DALSKSLLTL (257 aa)).

The protein belongs to the nuclear hormone receptor family.

The protein localises to the nucleus. Its function is as follows. Orphan nuclear receptor. This is Nuclear hormone receptor family member nhr-20 (nhr-20) from Caenorhabditis elegans.